Here is a 94-residue protein sequence, read N- to C-terminus: Co-chaperonin GroES (94 aa).

It belongs to the GroES chaperonin family. In terms of assembly, heptamer of 7 subunits arranged in a ring. Interacts with the chaperonin GroEL.

The protein localises to the cytoplasm. Functionally, together with the chaperonin GroEL, plays an essential role in assisting protein folding. The GroEL-GroES system forms a nano-cage that allows encapsulation of the non-native substrate proteins and provides a physical environment optimized to promote and accelerate protein folding. GroES binds to the apical surface of the GroEL ring, thereby capping the opening of the GroEL channel. The chain is Co-chaperonin GroES from Clostridium botulinum (strain Eklund 17B / Type B).